The sequence spans 396 residues: Bifunctional enzyme Fae/Hps (396 aa).

The tract at residues 1 to 161 is formaldehyde-activating enzyme; the sequence is MYQIGEALIG…YEKDRGVHAI (161 aa). Histidine 17 acts as the Proton donor in catalysis. Positions 19, 48, 66, 68, and 83 each coordinate substrate. A 3-hexulose-6-phosphate synthase region spans residues 162-396; the sequence is MGYKITRLWD…IDQYRIMTDF (235 aa).

This sequence in the N-terminal section; belongs to the formaldehyde-activating enzyme family. It in the C-terminal section; belongs to the HPS/KGPDC family. HPS subfamily.

The enzyme catalyses 5,6,7,8-tetrahydromethanopterin + formaldehyde = 5,10-methylenetetrahydromethanopterin + H2O. It carries out the reaction D-ribulose 5-phosphate + formaldehyde = D-arabino-hex-3-ulose 6-phosphate. The protein operates within carbohydrate biosynthesis; D-ribose 5-phosphate biosynthesis. Functionally, catalyzes the condensation of formaldehyde with tetrahydromethanopterin (H(4)MPT) to 5,10-methylenetetrahydromethanopterin. Catalyzes the reversible formation of ribulose-5-phosphate and formaldehyde from 3-hexulose-6-phosphate. The polypeptide is Bifunctional enzyme Fae/Hps (Methanocella arvoryzae (strain DSM 22066 / NBRC 105507 / MRE50)).